Reading from the N-terminus, the 833-residue chain is A disintegrin and metalloproteinase with thrombospondin motifs 4 (833 aa).

A signal peptide spans 1 to 49; that stretch reads MSQMGLHPRRGLTGHWLQRFQPCLPLHTVQWRRLLLLAFLLSLAWPASP. The propeptide occupies 50–208; the sequence is LPREEEIVFP…PSPISRRTKR (159 aa). A glycan (N-linked (GlcNAc...) asparagine) is linked at Asn63. The interval 180–204 is disordered; it reads KSPASSQGPMCTVKAPSGSPSPISR. The Cysteine switch signature appears at 188 to 195; the sequence is PMCTVKAP. Cys190 is a Zn(2+) binding site. One can recognise a Peptidase M12B domain in the interval 214–424; that stretch reads RFVETLVVAD…GYGHCLLDKP (211 aa). Cystine bridges form between Cys289-Cys341, Cys318-Cys323, Cys335-Cys419, Cys373-Cys403, Cys445-Cys468, Cys456-Cys478, Cys463-Cys497, Cys491-Cys502, Cys528-Cys565, Cys532-Cys570, and Cys543-Cys555. An N-linked (GlcNAc...) asparagine glycan is attached at Asn299. Position 357 (His357) interacts with Zn(2+). The active site involves Glu358. The Zn(2+) site is built by His361 and His367. Residues 433–515 form the Disintegrin domain; the sequence is TFPGKDYDAD…DQLKDFNVPQ (83 aa). Positions 516–571 constitute a TSP type-1 domain; the sequence is AGGWGPWGPWGDCSRTCGGGVQFSSRDCTRPVPRNGGKYCEGRRTRFRSCNTENCP. The interval 682-833 is spacer; it reads SKQSGSFKKF…LRKRPWAGRK (152 aa).

In terms of assembly, interacts with SRPX2. Zn(2+) serves as cofactor. In terms of processing, the precursor is cleaved by a furin endopeptidase. Post-translationally, glycosylated. Can be O-fucosylated by POFUT2 on a serine or a threonine residue found within the consensus sequence C1-X(2)-(S/T)-C2-G of the TSP type-1 repeat domains where C1 and C2 are the first and second cysteine residue of the repeat, respectively. Fucosylated repeats can then be further glycosylated by the addition of a beta-1,3-glucose residue by the glucosyltransferase, B3GALTL. Fucosylation mediates the efficient secretion of ADAMTS family members. Can also be C-glycosylated with one or two mannose molecules on tryptophan residues within the consensus sequence W-X-X-W of the TPRs, and N-glycosylated. These other glycosylations can also facilitate secretion.

It is found in the secreted. The protein localises to the extracellular space. It localises to the extracellular matrix. It carries out the reaction Glutamyl endopeptidase. Bonds cleaved include 370-Thr-Glu-Gly-Glu-|-Ala-Arg-Gly-Ser-377 in the interglobular domain of mammalian aggrecan.. Functionally, cleaves aggrecan, a cartilage proteoglycan, at the '392-Glu-|-Ala-393' site and may be involved in its turnover. Also cleaves COMP. May play an important role in the destruction of aggrecan in arthritic diseases. This Mus musculus (Mouse) protein is A disintegrin and metalloproteinase with thrombospondin motifs 4 (Adamts4).